A 201-amino-acid chain; its full sequence is Potassium-transporting ATPase KdpC subunit (201 aa).

The chain crosses the membrane as a helical span at residues leucine 12–leucine 34. The segment at threonine 73–threonine 102 is disordered. Positions serine 81–proline 101 are enriched in polar residues.

This sequence belongs to the KdpC family. In terms of assembly, the system is composed of three essential subunits: KdpA, KdpB and KdpC.

Its subcellular location is the cell inner membrane. Part of the high-affinity ATP-driven potassium transport (or Kdp) system, which catalyzes the hydrolysis of ATP coupled with the electrogenic transport of potassium into the cytoplasm. This subunit acts as a catalytic chaperone that increases the ATP-binding affinity of the ATP-hydrolyzing subunit KdpB by the formation of a transient KdpB/KdpC/ATP ternary complex. This is Potassium-transporting ATPase KdpC subunit from Rhodopseudomonas palustris (strain ATCC BAA-98 / CGA009).